A 184-amino-acid chain; its full sequence is MKNIINLVIFSGYWPIAGNFGLNTNLLETNLINLSVVVGLLVYFGKGVLNNLLSNRKQTILSTIKDAEERYNEATDKLNQARERLERAKVKADEIRVNGLSQIEREKKELINAADEDSKRLEDSKNATIRFEEQRAIEQVRQQVSRLALERALEALNKRLNSELHSRVIDYHIGLLRAMESTSD.

A helical transmembrane segment spans residues 4-24 (IINLVIFSGYWPIAGNFGLNT).

It belongs to the ATPase B chain family. F-type ATPases have 2 components, F(1) - the catalytic core - and F(0) - the membrane proton channel. F(1) has five subunits: alpha(3), beta(3), gamma(1), delta(1), epsilon(1). F(0) has four main subunits: a(1), b(1), b'(1) and c(10-14). The alpha and beta chains form an alternating ring which encloses part of the gamma chain. F(1) is attached to F(0) by a central stalk formed by the gamma and epsilon chains, while a peripheral stalk is formed by the delta, b and b' chains.

The protein localises to the plastid. The protein resides in the chloroplast thylakoid membrane. In terms of biological role, f(1)F(0) ATP synthase produces ATP from ADP in the presence of a proton or sodium gradient. F-type ATPases consist of two structural domains, F(1) containing the extramembraneous catalytic core and F(0) containing the membrane proton channel, linked together by a central stalk and a peripheral stalk. During catalysis, ATP synthesis in the catalytic domain of F(1) is coupled via a rotary mechanism of the central stalk subunits to proton translocation. Component of the F(0) channel, it forms part of the peripheral stalk, linking F(1) to F(0). This chain is ATP synthase subunit b, chloroplastic, found in Physcomitrium patens (Spreading-leaved earth moss).